The sequence spans 1194 residues: DNA polymerase catalytic subunit (1194 aa).

The protein belongs to the DNA polymerase type-B family. Forms a complex with the ssDNA-binding protein, the DNA polymerase processivity factor, and the alkaline exonuclease. Interacts with the helicase-primase complex composed of the primase, the helicase and the primase-associated factor; this interaction may coordinate leading and lagging strand DNA synthesis at the replication fork.

Its subcellular location is the host nucleus. It carries out the reaction DNA(n) + a 2'-deoxyribonucleoside 5'-triphosphate = DNA(n+1) + diphosphate. It catalyses the reaction Endonucleolytic cleavage to 5'-phosphomonoester.. Its function is as follows. Replicates viral genomic DNA. The replication complex is composed of six viral proteins: the DNA polymerase, processivity factor, primase, primase-associated factor, helicase, and ssDNA-binding protein. Additionally, the polymerase contains an intrinsic ribonuclease H (RNase H) activity that specifically degrades RNA/DNA heteroduplexes or duplex DNA substrates in the 5' to 3' direction. Therefore, it can catalyze the excision of the RNA primers that initiate the synthesis of Okazaki fragments at a replication fork during viral DNA replication. The protein is DNA polymerase catalytic subunit of Varicella-zoster virus (strain Dumas) (HHV-3).